The sequence spans 349 residues: Beta-hexosaminidase (349 aa).

Substrate contacts are provided by residues D64, R72, R138, and 168 to 169 (KH). H181 functions as the Proton donor/acceptor in the catalytic mechanism. D252 acts as the Nucleophile in catalysis.

This sequence belongs to the glycosyl hydrolase 3 family. NagZ subfamily.

It is found in the cytoplasm. It carries out the reaction Hydrolysis of terminal non-reducing N-acetyl-D-hexosamine residues in N-acetyl-beta-D-hexosaminides.. It functions in the pathway cell wall biogenesis; peptidoglycan recycling. Its function is as follows. Plays a role in peptidoglycan recycling by cleaving the terminal beta-1,4-linked N-acetylglucosamine (GlcNAc) from peptide-linked peptidoglycan fragments, giving rise to free GlcNAc, anhydro-N-acetylmuramic acid and anhydro-N-acetylmuramic acid-linked peptides. This chain is Beta-hexosaminidase, found in Nitrosospira multiformis (strain ATCC 25196 / NCIMB 11849 / C 71).